We begin with the raw amino-acid sequence, 233 residues long: Histone H1-I (233 aa).

Disordered regions lie at residues 1–55 (MSDS…HPPV) and 115–233 (TGAS…KKSK). The span at 17–29 (KAASPAKSPAKSP) shows a compositional bias: low complexity. The H15 domain maps to 51–125 (THPPVSEMVV…GASGSFKMPP (75 aa)). 2 stretches are compositionally biased toward basic and acidic residues: residues 128-137 (KKVDRPESAP) and 146-155 (TRVERKEKKV). Basic residues-rich tracts occupy residues 172–213 (AAKK…KPTP) and 223–233 (AAARKPAKKSK).

It belongs to the histone H1/H5 family.

The protein localises to the nucleus. It localises to the chromosome. Functionally, histones H1 are necessary for the condensation of nucleosome chains into higher-order structures. This Glyptotendipes barbipes (Midge) protein is Histone H1-I.